The primary structure comprises 477 residues: Glycogen synthase (477 aa).

K15 provides a ligand contact to ADP-alpha-D-glucose.

Belongs to the glycosyltransferase 1 family. Bacterial/plant glycogen synthase subfamily.

The enzyme catalyses [(1-&gt;4)-alpha-D-glucosyl](n) + ADP-alpha-D-glucose = [(1-&gt;4)-alpha-D-glucosyl](n+1) + ADP + H(+). It participates in glycan biosynthesis; glycogen biosynthesis. In terms of biological role, synthesizes alpha-1,4-glucan chains using ADP-glucose. The sequence is that of Glycogen synthase from Escherichia fergusonii (strain ATCC 35469 / DSM 13698 / CCUG 18766 / IAM 14443 / JCM 21226 / LMG 7866 / NBRC 102419 / NCTC 12128 / CDC 0568-73).